The chain runs to 465 residues: MYSPGAGSGAAGERKLCLLSLLLIGALGCAICHGNPVDDICIAKPRDIPVNPLCIYRSPGKKATEEDGSEQKVPEATNRRVWELSKANSRFATNFYQHLADSKNDNDNIFLSPLSISTAFAMTKLGACNDTLKQLMEVFKFDTISEKTSDQIHFFFAKLNCRLYRKANKSSDLVSANRLFGDKSLTFNESYQDVSEVVYGAKLQPLDFKENPEQSRVTINNWVANKTEGRIKDVIPQGAINELTALVLVNTIYFKGLWKSKFSPENTRKEPFYKVDGQSCPVPMMYQEGKFKYRRVAEGTQVLELPFKGDDITMVLILPKPEKSLAKVEQELTPELLQEWLDELSETMLVVHMPRFRTEDGFSLKEQLQDMGLIDLFSPEKSQLPGIVAGGRDDLYVSDAFHKAFLEVNEEGSEAAASTSVVITGRSLNPNRVTFKANRPFLVLIREVALNTIIFMGRVANPCVN.

A signal peptide spans 1–32 (MYSPGAGSGAAGERKLCLLSLLLIGALGCAIC). Cystine bridges form between cysteine 41-cysteine 161 and cysteine 54-cysteine 128. The residue at position 64 (threonine 64) is a Phosphothreonine. Serine 69 carries the post-translational modification Phosphoserine. Tryptophan 82 is a heparin binding site. A glycan (N-linked (GlcNAc...) asparagine) is linked at asparagine 129. A heparin-binding site is contributed by arginine 162. Asparagine 168 carries N-linked (GlcNAc...) asparagine glycosylation. Arginine 178 lines the heparin pocket. N-linked (GlcNAc...) asparagine glycosylation is found at asparagine 188 and asparagine 225. A disulfide bridge connects residues cysteine 280 and cysteine 463.

This sequence belongs to the serpin family. In terms of assembly, forms protease inhibiting heterodimer with TMPRSS7. Phosphorylated by FAM20C in the extracellular medium. As to expression, plasma.

The protein localises to the secreted. It is found in the extracellular space. In terms of biological role, most important serine protease inhibitor in plasma that regulates the blood coagulation cascade. AT-III inhibits thrombin, matriptase-3/TMPRSS7, as well as factors IXa, Xa and XIa. Its inhibitory activity is greatly enhanced in the presence of heparin. This chain is Antithrombin-III (Serpinc1), found in Mus musculus (Mouse).